The primary structure comprises 983 residues: UPF0182 protein KRH_08700 (983 aa).

Transmembrane regions (helical) follow at residues Gly-22 to Thr-42, Val-67 to Trp-87, Val-116 to Gln-136, Leu-172 to His-192, Val-213 to Asp-233, Gly-261 to Gly-281, and Ile-288 to Ile-308. The interval Gly-893–Thr-959 is disordered. Residues Gln-947–Thr-959 show a composition bias toward basic and acidic residues.

This sequence belongs to the UPF0182 family.

The protein resides in the cell membrane. This is UPF0182 protein KRH_08700 from Kocuria rhizophila (strain ATCC 9341 / DSM 348 / NBRC 103217 / DC2201).